We begin with the raw amino-acid sequence, 477 residues long: Alkaline phosphatase (477 aa).

A Mg(2+)-binding site is contributed by aspartate 44. Residue aspartate 44 participates in Zn(2+) binding. Residue serine 94 is the Phosphoserine intermediate of the active site. An N-linked (GlcNAc...) asparagine glycan is attached at asparagine 124. Residues histidine 155 and threonine 157 each contribute to the Mg(2+) site. Cysteine 165 and cysteine 185 are disulfide-bonded. Residue asparagine 214 is glycosylated (N-linked (GlcNAc...) asparagine). Position 315 (glutamate 315) interacts with Mg(2+). 4 residues coordinate Zn(2+): aspartate 320, histidine 324, aspartate 361, and histidine 362. N-linked (GlcNAc...) asparagine glycosylation occurs at asparagine 413. Position 437 (histidine 437) interacts with Zn(2+).

Homodimer. The cofactor is Mg(2+). It depends on Zn(2+) as a cofactor.

The protein resides in the cell membrane. It catalyses the reaction a phosphate monoester + H2O = an alcohol + phosphate. This chain is Alkaline phosphatase, found in Gadus morhua (Atlantic cod).